A 444-amino-acid polypeptide reads, in one-letter code: 1,4-beta-D-glucan glucohydrolase (444 aa).

Residue E164 is the Proton donor of the active site. The Nucleophile role is filled by E349.

Belongs to the glycosyl hydrolase 1 family. As to quaternary structure, monomer.

The enzyme catalyses Hydrolysis of (1-&gt;4)-linkages in (1-&gt;4)-beta-D-glucans, to remove successive glucose units.. It carries out the reaction Hydrolysis of terminal, non-reducing beta-D-glucosyl residues with release of beta-D-glucose.. It participates in glycan metabolism; cellulose degradation. The protein operates within glycan metabolism; beta-D-glucan degradation. Activated by glucose up to 200 mM when p-nitrophenyl-beta-glucoside is used as the substrate. This activation by end product concentrations may be due to a transglycosylation activity of the enzyme. Broad substrate specificity glycosidase. Releases glucose from soluble glucooligomers, with a preference for longer oligomers; acts more readily on cellotetraose than on cellobiose. Displays similar activities towards the disaccharides lactose and cellobiose. Is also able to hydrolyze various aryl-beta-glycosides in vitro. In Thermotoga neapolitana (strain ATCC 49049 / DSM 4359 / NBRC 107923 / NS-E), this protein is 1,4-beta-D-glucan glucohydrolase.